The chain runs to 166 residues: Small ribosomal subunit protein uS4 (166 aa).

An S4 RNA-binding domain is found at 103–165; it reads RRLQTVVYKK…PTSPYFKKAQ (63 aa).

This sequence belongs to the universal ribosomal protein uS4 family. In terms of assembly, part of the 30S ribosomal subunit. Contacts protein S5. The interaction surface between S4 and S5 is involved in control of translational fidelity.

In terms of biological role, one of the primary rRNA binding proteins, it binds directly to 16S rRNA where it nucleates assembly of the body of the 30S subunit. With S5 and S12 plays an important role in translational accuracy. In Ignicoccus hospitalis (strain KIN4/I / DSM 18386 / JCM 14125), this protein is Small ribosomal subunit protein uS4.